The sequence spans 186 residues: Biphenyl dioxygenase subunit beta (186 aa).

The protein belongs to the bacterial ring-hydroxylating dioxygenase beta subunit family. As to quaternary structure, heterohexamer consisting of 3 BphA subunits and 3 BphE subunits. A ferredoxin (BphF) and a ferredoxin reductase (BphG) must be present to obtain activity.

The enzyme catalyses biphenyl + NADH + O2 + H(+) = (2R,3S)-3-phenylcyclohexa-3,5-diene-1,2-diol + NAD(+). It functions in the pathway xenobiotic degradation; biphenyl degradation; 2-hydroxy-2,4-pentadienoate and benzoate from biphenyl: step 1/4. In terms of biological role, the beta subunit may be responsible for the substrate specificity of the enzyme. The chain is Biphenyl dioxygenase subunit beta (bphE) from Comamonas testosteroni (Pseudomonas testosteroni).